We begin with the raw amino-acid sequence, 360 residues long: Luc7-like protein (360 aa).

Positions 143 to 206 form a coiled coil; it reads KEQNSKITEL…QEKNENKRMS (64 aa). Residues 255–360 are disordered; that stretch reads LGRTDFYNAP…DDRRKRDRNY (106 aa). The segment covering 269-293 has biased composition (basic and acidic residues); it reads DSYRDDRRSSSSSYHDIDGRRDHRY. Over residues 312–321 the composition is skewed to low complexity; it reads NNGRGSSRDN. Residues 329 to 360 show a composition bias toward basic and acidic residues; that stretch reads RDYRNDHGKDYDRKRERDYYNDDDRRKRDRNY.

It belongs to the Luc7 family.

Its subcellular location is the nucleus. Its function is as follows. May play a role in RNA splicing. The sequence is that of Luc7-like protein (crop) from Dictyostelium discoideum (Social amoeba).